A 208-amino-acid polypeptide reads, in one-letter code: Small ribosomal subunit protein uS4 (208 aa).

One can recognise an S4 RNA-binding domain in the interval Thr-97–Glu-158.

It belongs to the universal ribosomal protein uS4 family. In terms of assembly, part of the 30S ribosomal subunit. Contacts protein S5. The interaction surface between S4 and S5 is involved in control of translational fidelity.

One of the primary rRNA binding proteins, it binds directly to 16S rRNA where it nucleates assembly of the body of the 30S subunit. In terms of biological role, with S5 and S12 plays an important role in translational accuracy. In Xylella fastidiosa (strain M12), this protein is Small ribosomal subunit protein uS4.